A 134-amino-acid chain; its full sequence is Profilin-3 (134 aa).

Cys-13 and Cys-118 are disulfide-bonded. Residues 84–100 carry the Involved in PIP2 interaction motif; it reads AVIRGKKGSGGITSKKT. A Phosphothreonine modification is found at Thr-114.

It belongs to the profilin family. Occurs in many kinds of cells as a complex with monomeric actin in a 1:1 ratio. In terms of processing, phosphorylated by MAP kinases.

The protein resides in the cytoplasm. It is found in the cytoskeleton. Binds to actin and affects the structure of the cytoskeleton. At high concentrations, profilin prevents the polymerization of actin, whereas it enhances it at low concentrations. This chain is Profilin-3, found in Olea europaea (Common olive).